The following is a 541-amino-acid chain: Nif-specific regulatory protein (541 aa).

The region spanning 23–158 is the GAF domain; sequence RLETTLNNFV…MAANLAGRAI (136 aa). Positions 170–191 are disordered; sequence TFAEEQQEQQNSRDEQSQSSAR. In terms of domain architecture, Sigma-54 factor interaction spans 200–428; that stretch reads IIGESTALMT…LENCVRRTAT (229 aa). ATP-binding positions include 228–235 and 291–300; these read GETGTGKE and ANGGTLLLDE. The tract at residues 429 to 498 is inter-domain linker; it reads LARSKTITSS…SAGVASNLIE (70 aa). Cys442 and Cys447 together coordinate a divalent metal cation. Positions 499–541 are C-terminal DNA-binding domain; it reads RDRLISALEEAGWNQAKAARILEKTPRQVGYALRRHGVDVRKL. Residues 513-532 constitute a DNA-binding region (H-T-H motif); sequence QAKAARILEKTPRQVGYALR.

In terms of assembly, interacts with sigma-54.

In terms of biological role, required for activation of most nif operons, which are directly involved in nitrogen fixation. The chain is Nif-specific regulatory protein (nifA) from Rhizobium meliloti (strain 1021) (Ensifer meliloti).